A 500-amino-acid chain; its full sequence is 2-isopropylmalate synthase (500 aa).

Positions leucine 5–tyrosine 266 constitute a Pyruvate carboxyltransferase domain. Aspartate 14, histidine 202, histidine 204, and asparagine 238 together coordinate Mn(2+). The segment at lysine 389–aspartate 500 is regulatory domain.

The protein belongs to the alpha-IPM synthase/homocitrate synthase family. LeuA type 1 subfamily. As to quaternary structure, homodimer. Mn(2+) serves as cofactor.

Its subcellular location is the cytoplasm. It carries out the reaction 3-methyl-2-oxobutanoate + acetyl-CoA + H2O = (2S)-2-isopropylmalate + CoA + H(+). The protein operates within amino-acid biosynthesis; L-leucine biosynthesis; L-leucine from 3-methyl-2-oxobutanoate: step 1/4. Functionally, catalyzes the condensation of the acetyl group of acetyl-CoA with 3-methyl-2-oxobutanoate (2-ketoisovalerate) to form 3-carboxy-3-hydroxy-4-methylpentanoate (2-isopropylmalate). The chain is 2-isopropylmalate synthase from Parabacteroides distasonis (strain ATCC 8503 / DSM 20701 / CIP 104284 / JCM 5825 / NCTC 11152).